The primary structure comprises 513 residues: Probable G-protein coupled receptor 176 (513 aa).

The tract at residues Met-1 to Ala-25 is disordered. The Extracellular segment spans residues Met-1–Gln-41. N-linked (GlcNAc...) asparagine glycans are attached at residues Asn-4, Asn-11, Asn-17, and Asn-26. A helical membrane pass occupies residues Phe-42–Ser-64. At Thr-65–Arg-77 the chain is on the cytoplasmic side. The helical transmembrane segment at Phe-78–Ile-98 threads the bilayer. Topologically, residues Ile-99–Trp-108 are extracellular. The chain crosses the membrane as a helical span at residues Trp-109–Val-129. The Cytoplasmic portion of the chain corresponds to Thr-130–Lys-157. Residues Ser-158–Phe-177 form a helical membrane-spanning segment. Topologically, residues Ala-178 to Tyr-204 are extracellular. Residues Val-205–Ile-225 traverse the membrane as a helical segment. The Cytoplasmic portion of the chain corresponds to Leu-226–His-264. A helical transmembrane segment spans residues Ala-265–Val-285. Residues Val-286 to Leu-301 lie on the Extracellular side of the membrane. The chain crosses the membrane as a helical span at residues Leu-302 to Val-322. Residues Asn-323–Ser-513 lie on the Cytoplasmic side of the membrane. The segment at Val-404–Val-432 is disordered.

The protein belongs to the G-protein coupled receptor 1 family. In terms of tissue distribution, expressed in brain, lung, heart, stomach, intestine, cultured aortic smooth muscle cells and cardiac myocytes.

The protein resides in the cell membrane. Functionally, orphan receptor involved in normal circadian rhythm behavior. Acts through the G-protein subclass G(z)-alpha and has an agonist-independent basal activity to repress cAMP production. The sequence is that of Probable G-protein coupled receptor 176 (Gpr176) from Rattus norvegicus (Rat).